The primary structure comprises 76 residues: uncharacterized protein (76 aa).

This is an uncharacterized protein from Sulfolobus islandicus rod-shaped virus 1 (SIRV-1).